Reading from the N-terminus, the 100-residue chain is uncharacterized protein (100 aa).

The next 2 helical transmembrane spans lie at 17-37 and 78-98; these read IIILTLLFILIMLIFRNSVSF and MVDKTRLFIFLFFSFIITIPF.

The protein localises to the endoplasmic reticulum membrane. This is an uncharacterized protein from Saccharomyces cerevisiae (strain ATCC 204508 / S288c) (Baker's yeast).